Consider the following 807-residue polypeptide: Centrosomal protein of 97 kDa (807 aa).

LRR repeat units follow at residues 34 to 55 (DTQTLILDKNQIIKLEHVEKCR), 56 to 77 (NLVQLSVANNRLVRMMGVAKLI), 78 to 99 (HLRVLNLPHNSIGYVEGLKDLV), 100 to 121 (HLEWINLAGNNLKIIDQINSST), 122 to 143 (SLQHLDLSDNNISQIGDLSKLK), 144 to 165 (SLKTLLLHGNNIASLRAASACL), and 168 to 189 (SLTILSLAENEIRDLNEVAFLA). The LRRCT domain maps to 208–246 (TPSIPGFDYRPFIVSWCLNLKVLDGYVVSQKESLKAEWL). The interval 306-330 (RSDGYLTSSTPNKRLPLSTEHHSPT) is disordered. Residues 519 to 548 (ISKAATKLQSCWRGFYARKYNPKVKDVCYE) form the IQ domain. Residues 607-623 (TANSSENDLPSASNSKH) show a composition bias toward polar residues. Residues 607–756 (TANSSENDLP…RPEITTCSDN (150 aa)) are disordered. The segment covering 681 to 690 (TGRHYNDKVP) has biased composition (basic and acidic residues). Over residues 704 to 724 (SQSSKDSFTSEQDSSLLQQYL) the composition is skewed to polar residues.

The protein resides in the cytoplasm. It localises to the cytoskeleton. It is found in the microtubule organizing center. The protein localises to the centrosome. Acts as a key negative regulator of ciliogenesis in collaboration with ccp110 by capping the mother centriole thereby preventing cilia formation. Required for recruitment of ccp110 to the centrosome. The sequence is that of Centrosomal protein of 97 kDa (cep97) from Xenopus laevis (African clawed frog).